Reading from the N-terminus, the 595-residue chain is Elongation factor 4 (595 aa).

The 183-residue stretch at 2–184 (SHIRNFSIIA…RLVATIPPPT (183 aa)) folds into the tr-type G domain. GTP-binding positions include 14 to 19 (DHGKST) and 131 to 134 (NKMD).

This sequence belongs to the TRAFAC class translation factor GTPase superfamily. Classic translation factor GTPase family. LepA subfamily.

The protein resides in the cell inner membrane. The enzyme catalyses GTP + H2O = GDP + phosphate + H(+). Functionally, required for accurate and efficient protein synthesis under certain stress conditions. May act as a fidelity factor of the translation reaction, by catalyzing a one-codon backward translocation of tRNAs on improperly translocated ribosomes. Back-translocation proceeds from a post-translocation (POST) complex to a pre-translocation (PRE) complex, thus giving elongation factor G a second chance to translocate the tRNAs correctly. Binds to ribosomes in a GTP-dependent manner. This Pseudomonas syringae pv. tomato (strain ATCC BAA-871 / DC3000) protein is Elongation factor 4.